The sequence spans 181 residues: Inner membrane-spanning protein YciB (181 aa).

Helical transmembrane passes span 8–28, 53–73, 76–96, 121–141, and 149–169; these read FPIICFFVAYKFWGIYIATAA, ITLIFILLLGSFTLVFHNAIF, WKPTIVYWIFAIVLFGSHFFG, LSWALFFLILGVLNLFVVYNF, and FKLFGTLVLTLVFILGQAFYI.

The protein belongs to the YciB family.

The protein resides in the cell inner membrane. Plays a role in cell envelope biogenesis, maintenance of cell envelope integrity and membrane homeostasis. The polypeptide is Inner membrane-spanning protein YciB (Coxiella burnetii (strain RSA 331 / Henzerling II)).